Reading from the N-terminus, the 225-residue chain is Cytidylate kinase (225 aa).

11–19 (GPAGAGKGT) is an ATP binding site. Basic and acidic residues predominate over residues 169–185 (MDRIKSRIEERDARDQS). A disordered region spans residues 169-195 (MDRIKSRIEERDARDQSRATAPLAAAP).

This sequence belongs to the cytidylate kinase family. Type 1 subfamily.

It localises to the cytoplasm. The enzyme catalyses CMP + ATP = CDP + ADP. It carries out the reaction dCMP + ATP = dCDP + ADP. The polypeptide is Cytidylate kinase (Magnetococcus marinus (strain ATCC BAA-1437 / JCM 17883 / MC-1)).